We begin with the raw amino-acid sequence, 259 residues long: Hydroxyacylglutathione hydrolase (259 aa).

7 residues coordinate Zn(2+): His-56, His-58, Asp-60, His-61, His-112, Asp-133, and His-171.

It belongs to the metallo-beta-lactamase superfamily. Glyoxalase II family. As to quaternary structure, monomer. Zn(2+) serves as cofactor.

It carries out the reaction an S-(2-hydroxyacyl)glutathione + H2O = a 2-hydroxy carboxylate + glutathione + H(+). It functions in the pathway secondary metabolite metabolism; methylglyoxal degradation; (R)-lactate from methylglyoxal: step 2/2. Thiolesterase that catalyzes the hydrolysis of S-D-lactoyl-glutathione to form glutathione and D-lactic acid. This chain is Hydroxyacylglutathione hydrolase, found in Pseudomonas putida (strain GB-1).